The sequence spans 114 residues: Large ribosomal subunit protein uL18 (114 aa).

It belongs to the universal ribosomal protein uL18 family. In terms of assembly, part of the 50S ribosomal subunit; part of the 5S rRNA/L5/L18/L25 subcomplex. Contacts the 5S and 23S rRNAs.

Its function is as follows. This is one of the proteins that bind and probably mediate the attachment of the 5S RNA into the large ribosomal subunit, where it forms part of the central protuberance. The sequence is that of Large ribosomal subunit protein uL18 from Porphyromonas gingivalis (strain ATCC BAA-308 / W83).